The following is an 848-amino-acid chain: ATP-dependent Clp protease ATP-binding subunit ClpC1 (848 aa).

One can recognise a Clp R domain in the interval 2-144; the sequence is FERFTDRARR…RQQVIQLLSG (143 aa). Repeat regions lie at residues 5-70 and 80-144; these read FTDR…IGQG and FTPR…LLSG. The segment at 171-418 is i; that stretch reads LDQFGRNLTA…RMRIRRMTAP (248 aa). An ATP-binding site is contributed by 216-223; it reads GEPGVGKT. One can recognise a UVR domain in the interval 425–460; it reads DEKIAEARREKESAIDAQDFEKAASLRDREKTLVAQ. The interval 479–670 is II; sequence VDDEQIAEVL…VLIFTSNLGT (192 aa). 553-560 is an ATP binding site; it reads GPSGVGKT. The segment at 821-848 is disordered; it reads TGTRKPPAEPDLAKAGAHSAGGPEPAAR.

The protein belongs to the ClpA/ClpB family. ClpC subfamily.

In terms of biological role, ATP-dependent specificity component of the Clp protease. It directs the protease to specific substrates. Can perform chaperone functions in the absence of ClpP. Degrades anti-sigma-E factor RseA in the presence of ClpP2. This Mycobacterium tuberculosis (strain ATCC 25618 / H37Rv) protein is ATP-dependent Clp protease ATP-binding subunit ClpC1 (clpC1).